A 521-amino-acid chain; its full sequence is Cholesterol side-chain cleavage enzyme, mitochondrial (521 aa).

A mitochondrion-targeting transit peptide spans 1 to 39 (MLAKGLPPRSVLVKGCQTFLSAPREGLGRLRVPTGEGAG). A heme-binding site is contributed by Cys-462.

It belongs to the cytochrome P450 family. Interacts with FDX1/adrenodoxin. Requires heme as cofactor.

It localises to the mitochondrion inner membrane. It catalyses the reaction 6 reduced [adrenodoxin] + cholesterol + 3 O2 + 6 H(+) = 4-methylpentanal + pregnenolone + 6 oxidized [adrenodoxin] + 4 H2O. The catalysed reaction is 2 reduced [adrenodoxin] + cholesterol + O2 + 2 H(+) = (22R)-hydroxycholesterol + 2 oxidized [adrenodoxin] + H2O. It carries out the reaction (22R)-hydroxycholesterol + 2 reduced [adrenodoxin] + O2 + 2 H(+) = (20R,22R)-20,22-dihydroxycholesterol + 2 oxidized [adrenodoxin] + H2O. The enzyme catalyses (20R,22R)-20,22-dihydroxycholesterol + 2 reduced [adrenodoxin] + O2 + 2 H(+) = 4-methylpentanal + pregnenolone + 2 oxidized [adrenodoxin] + 2 H2O. It participates in lipid metabolism; C21-steroid hormone metabolism. The protein operates within steroid metabolism; cholesterol metabolism. In terms of biological role, a cytochrome P450 monooxygenase that catalyzes the side-chain hydroxylation and cleavage of cholesterol to pregnenolone, the precursor of most steroid hormones. Catalyzes three sequential oxidation reactions of cholesterol, namely the hydroxylation at C22 followed with the hydroxylation at C20 to yield 20R,22R-hydroxycholesterol that is further cleaved between C20 and C22 to yield the C21-steroid pregnenolone and 4-methylpentanal. Mechanistically, uses molecular oxygen inserting one oxygen atom into a substrate and reducing the second into a water molecule. Two electrons are provided by NADPH via a two-protein mitochondrial transfer system comprising flavoprotein FDXR (adrenodoxin/ferredoxin reductase) and nonheme iron-sulfur protein FDX1 or FDX2 (adrenodoxin/ferredoxin). In Homo sapiens (Human), this protein is Cholesterol side-chain cleavage enzyme, mitochondrial.